The chain runs to 531 residues: O-phosphoserine--tRNA(Cys) ligase (531 aa).

Residues 189 to 191, 234 to 236, 276 to 277, and Asn319 each bind substrate; these read HMT, SAS, and YY.

Belongs to the class-II aminoacyl-tRNA synthetase family. O-phosphoseryl-tRNA(Cys) synthetase subfamily. As to quaternary structure, homotetramer. Interacts with SepCysS.

It carries out the reaction tRNA(Cys) + O-phospho-L-serine + ATP = O-phospho-L-seryl-tRNA(Cys) + AMP + diphosphate. Functionally, catalyzes the attachment of O-phosphoserine (Sep) to tRNA(Cys). The chain is O-phosphoserine--tRNA(Cys) ligase from Methanospirillum hungatei JF-1 (strain ATCC 27890 / DSM 864 / NBRC 100397 / JF-1).